The following is a 195-amino-acid chain: Antigenic thaumatin-like protein ARB_01183 (195 aa).

A signal peptide spans 1 to 22 (MHSNTAVIALSALAALVPAALA). Cystine bridges form between Cys125–Cys153 and Cys130–Cys137. The tract at residues 171 to 195 (GPKKMFKPVQEKAANRPRHPHARPE) is disordered. The segment covering 185–195 (NRPRHPHARPE) has biased composition (basic residues).

Belongs to the thaumatin family.

It is found in the secreted. Might be involved in the inhibition of growth of fungal competitors and pathogenicity. This chain is Antigenic thaumatin-like protein ARB_01183, found in Arthroderma benhamiae (strain ATCC MYA-4681 / CBS 112371) (Trichophyton mentagrophytes).